A 126-amino-acid chain; its full sequence is Glycine cleavage system H protein (126 aa).

A Lipoyl-binding domain is found at 21–103; that stretch reads TVTIGISEHA…YDGGWIVKVK (83 aa). Lysine 62 carries the N6-lipoyllysine modification.

Belongs to the GcvH family. As to quaternary structure, the glycine cleavage system is composed of four proteins: P, T, L and H. The cofactor is (R)-lipoate.

Its function is as follows. The glycine cleavage system catalyzes the degradation of glycine. The H protein shuttles the methylamine group of glycine from the P protein to the T protein. The protein is Glycine cleavage system H protein of Vibrio cholerae serotype O1 (strain ATCC 39541 / Classical Ogawa 395 / O395).